We begin with the raw amino-acid sequence, 395 residues long: Cystathionine beta-lyase MetC (395 aa).

Lys210 is modified (N6-(pyridoxal phosphate)lysine).

The protein belongs to the trans-sulfuration enzymes family. In terms of assembly, homotetramer; dimer of dimers. Pyridoxal 5'-phosphate is required as a cofactor.

The protein resides in the cytoplasm. It catalyses the reaction L,L-cystathionine + H2O = L-homocysteine + pyruvate + NH4(+). The enzyme catalyses L-cysteine + H2O = hydrogen sulfide + pyruvate + NH4(+) + H(+). It carries out the reaction an S-substituted L-cysteine + H2O = a thiol + pyruvate + NH4(+). It functions in the pathway amino-acid biosynthesis; L-methionine biosynthesis via de novo pathway; L-homocysteine from L-cystathionine: step 1/1. Its activity is regulated as follows. L-cysteine inhibits cystathionine beta-lyase activity competitively. Inhibited by aminoethoxyvinylglycine (AVG). In terms of biological role, primarily catalyzes the cleavage of cystathionine to homocysteine, pyruvate and ammonia during methionine biosynthesis. Also exhibits cysteine desulfhydrase activity, producing sulfide from cysteine. In addition, under certain growth conditions, exhibits significant alanine racemase coactivity. The polypeptide is Cystathionine beta-lyase MetC (Escherichia coli (strain K12)).